A 119-amino-acid polypeptide reads, in one-letter code: Large ribosomal subunit protein uL22 (119 aa).

This sequence belongs to the universal ribosomal protein uL22 family. In terms of assembly, part of the 50S ribosomal subunit.

In terms of biological role, this protein binds specifically to 23S rRNA; its binding is stimulated by other ribosomal proteins, e.g. L4, L17, and L20. It is important during the early stages of 50S assembly. It makes multiple contacts with different domains of the 23S rRNA in the assembled 50S subunit and ribosome. Functionally, the globular domain of the protein is located near the polypeptide exit tunnel on the outside of the subunit, while an extended beta-hairpin is found that lines the wall of the exit tunnel in the center of the 70S ribosome. The chain is Large ribosomal subunit protein uL22 from Rickettsia prowazekii (strain Madrid E).